The chain runs to 101 residues: NAD(P)H-quinone oxidoreductase subunit 4L, chloroplastic (101 aa).

3 helical membrane-spanning segments follow: residues 2 to 22 (ILEH…YGLI), 32 to 52 (MCLE…SDFF), and 61 to 81 (IFSI…LAIV).

It belongs to the complex I subunit 4L family. NDH is composed of at least 16 different subunits, 5 of which are encoded in the nucleus.

Its subcellular location is the plastid. It localises to the chloroplast thylakoid membrane. It carries out the reaction a plastoquinone + NADH + (n+1) H(+)(in) = a plastoquinol + NAD(+) + n H(+)(out). It catalyses the reaction a plastoquinone + NADPH + (n+1) H(+)(in) = a plastoquinol + NADP(+) + n H(+)(out). Its function is as follows. NDH shuttles electrons from NAD(P)H:plastoquinone, via FMN and iron-sulfur (Fe-S) centers, to quinones in the photosynthetic chain and possibly in a chloroplast respiratory chain. The immediate electron acceptor for the enzyme in this species is believed to be plastoquinone. Couples the redox reaction to proton translocation, and thus conserves the redox energy in a proton gradient. The sequence is that of NAD(P)H-quinone oxidoreductase subunit 4L, chloroplastic from Oenothera argillicola (Appalachian evening primrose).